We begin with the raw amino-acid sequence, 511 residues long: ATP synthase subunit alpha (511 aa).

169–176 is an ATP binding site; the sequence is GDRQTGKT.

This sequence belongs to the ATPase alpha/beta chains family. F-type ATPases have 2 components, CF(1) - the catalytic core - and CF(0) - the membrane proton channel. CF(1) has five subunits: alpha(3), beta(3), gamma(1), delta(1), epsilon(1). CF(0) has three main subunits: a(1), b(2) and c(9-12). The alpha and beta chains form an alternating ring which encloses part of the gamma chain. CF(1) is attached to CF(0) by a central stalk formed by the gamma and epsilon chains, while a peripheral stalk is formed by the delta and b chains.

Its subcellular location is the cell inner membrane. The enzyme catalyses ATP + H2O + 4 H(+)(in) = ADP + phosphate + 5 H(+)(out). Its function is as follows. Produces ATP from ADP in the presence of a proton gradient across the membrane. The alpha chain is a regulatory subunit. The chain is ATP synthase subunit alpha from Paracoccus denitrificans (strain Pd 1222).